The following is a 438-amino-acid chain: tRNA-2-methylthio-N(6)-dimethylallyladenosine synthase (438 aa).

An MTTase N-terminal domain is found at 3–123; the sequence is KRLFVKTYGC…LPEMVAQAAR (121 aa). Residues cysteine 12, cysteine 48, cysteine 86, cysteine 160, cysteine 164, and cysteine 167 each coordinate [4Fe-4S] cluster. Residues 146–374 form the Radical SAM core domain; sequence HAEGTSAFLS…QALLLDQTMR (229 aa). Residues 377 to 438 enclose the TRAM domain; the sequence is HACVGREMRI…HPNSLEAVPA (62 aa).

Belongs to the methylthiotransferase family. MiaB subfamily. In terms of assembly, monomer. Requires [4Fe-4S] cluster as cofactor.

It is found in the cytoplasm. The catalysed reaction is N(6)-dimethylallyladenosine(37) in tRNA + (sulfur carrier)-SH + AH2 + 2 S-adenosyl-L-methionine = 2-methylsulfanyl-N(6)-dimethylallyladenosine(37) in tRNA + (sulfur carrier)-H + 5'-deoxyadenosine + L-methionine + A + S-adenosyl-L-homocysteine + 2 H(+). In terms of biological role, catalyzes the methylthiolation of N6-(dimethylallyl)adenosine (i(6)A), leading to the formation of 2-methylthio-N6-(dimethylallyl)adenosine (ms(2)i(6)A) at position 37 in tRNAs that read codons beginning with uridine. The sequence is that of tRNA-2-methylthio-N(6)-dimethylallyladenosine synthase from Paramagnetospirillum magneticum (strain ATCC 700264 / AMB-1) (Magnetospirillum magneticum).